The following is a 357-amino-acid chain: S-adenosylmethionine:tRNA ribosyltransferase-isomerase (357 aa).

Belongs to the QueA family. Monomer.

The protein localises to the cytoplasm. The enzyme catalyses 7-aminomethyl-7-carbaguanosine(34) in tRNA + S-adenosyl-L-methionine = epoxyqueuosine(34) in tRNA + adenine + L-methionine + 2 H(+). The protein operates within tRNA modification; tRNA-queuosine biosynthesis. In terms of biological role, transfers and isomerizes the ribose moiety from AdoMet to the 7-aminomethyl group of 7-deazaguanine (preQ1-tRNA) to give epoxyqueuosine (oQ-tRNA). This is S-adenosylmethionine:tRNA ribosyltransferase-isomerase from Buchnera aphidicola subsp. Acyrthosiphon pisum (strain APS) (Acyrthosiphon pisum symbiotic bacterium).